Reading from the N-terminus, the 78-residue chain is Large ribosomal subunit protein bL28 (78 aa).

A disordered region spans residues 1-20 (MSRVCQVTGKRPVTGNNRSH).

The protein belongs to the bacterial ribosomal protein bL28 family.

In Vibrio atlanticus (strain LGP32) (Vibrio splendidus (strain Mel32)), this protein is Large ribosomal subunit protein bL28.